The primary structure comprises 223 residues: Adenylate kinase 4, mitochondrial (223 aa).

An a ribonucleoside 5'-triphosphate-binding site is contributed by 15 to 20; sequence GSGKGT. The segment at 35–64 is NMP; it reads SSGHFLRENIKASTEVGEMAKQYIEKSLLV. AMP contacts are provided by S36 and R41. K60 is subject to N6-succinyllysine. AMP-binding positions include 62–64, 89–92, and Q96; these read LLV and GFPR. Positions 125 to 162 are LID; that stretch reads RRWIHPPSGRVYNLDFNPPHVHGIDDVTGEPLVQQEDD. Residues R126 and 135–136 each bind a ribonucleoside 5'-triphosphate; that span reads VY. R170 contributes to the AMP binding site. K175 bears the N6-acetyllysine mark. An N6-acetyllysine; alternate mark is found at K179 and K186. N6-succinyllysine; alternate occurs at positions 179 and 186. Residue T199 participates in a ribonucleoside 5'-triphosphate binding.

Belongs to the adenylate kinase family. AK3 subfamily. As to quaternary structure, monomer. Interacts with SLC25A5/ANT2. Highly expressed in kidney, moderately expressed in heart and liver and weakly expressed in brain.

It is found in the mitochondrion matrix. It carries out the reaction a ribonucleoside 5'-phosphate + ATP = a ribonucleoside 5'-diphosphate + ADP. The catalysed reaction is AMP + ATP = 2 ADP. The enzyme catalyses GTP + AMP = GDP + ADP. It catalyses the reaction CMP + ATP = CDP + ADP. It carries out the reaction GTP + CMP = CDP + GDP. The catalysed reaction is dAMP + ATP = dADP + ADP. The enzyme catalyses dCMP + ATP = dCDP + ADP. It catalyses the reaction a 2'-deoxyribonucleoside 5'-diphosphate + ATP = a 2'-deoxyribonucleoside 5'-triphosphate + ADP. It carries out the reaction a ribonucleoside 5'-diphosphate + ATP = a ribonucleoside 5'-triphosphate + ADP. The catalysed reaction is GDP + ATP = GTP + ADP. The enzyme catalyses CDP + GTP = CTP + GDP. It catalyses the reaction CDP + ATP = CTP + ADP. It carries out the reaction UDP + ATP = UTP + ADP. The catalysed reaction is GTP + UDP = UTP + GDP. The enzyme catalyses dADP + GTP = dATP + GDP. It catalyses the reaction dCDP + GTP = dCTP + GDP. It carries out the reaction dCDP + ATP = dCTP + ADP. The catalysed reaction is dGDP + ATP = dGTP + ADP. The enzyme catalyses dTDP + GTP = dTTP + GDP. It catalyses the reaction dTDP + ATP = dTTP + ADP. Its function is as follows. Broad-specificity mitochondrial nucleoside phosphate kinase involved in cellular nucleotide homeostasis by catalyzing nucleoside-phosphate interconversions. Similar to other adenylate kinases, preferentially catalyzes the phosphorylation of the nucleoside monophosphate AMP with ATP as phosphate donor to produce ADP. Phosphorylates only AMP when using GTP as phosphate donor. In vitro, can also catalyze the phosphorylation of CMP, dAMP and dCMP and use GTP as an alternate phosphate donor. Moreover, exhibits a diphosphate kinase activity, producing ATP, CTP, GTP, UTP, TTP, dATP, dCTP and dGTP from the corresponding diphosphate substrates with either ATP or GTP as phosphate donors. Plays a role in controlling cellular ATP levels by regulating phosphorylation and activation of the energy sensor protein kinase AMPK. Plays a protective role in the cellular response to oxidative stress. This chain is Adenylate kinase 4, mitochondrial, found in Homo sapiens (Human).